Here is a 246-residue protein sequence, read N- to C-terminus: uncharacterized protein (246 aa).

Residues 120-149 (EKCAGETSPYTSASVSNSKKATSSSNFTKS) form a disordered region. The span at 130–149 (TSASVSNSKKATSSSNFTKS) shows a compositional bias: low complexity.

This is an uncharacterized protein from Caenorhabditis elegans.